The chain runs to 414 residues: Tyrosine--tRNA ligase (414 aa).

L-tyrosine is bound at residue Y35. The short motif at 40 to 49 (PTADSLHVGH) is the 'HIGH' region element. L-tyrosine-binding residues include Y164 and Q168. A 'KMSKS' region motif is present at residues 226–230 (KFGKT). K229 contacts ATP. Positions 347-414 (TKVIDALIEV…KKKYFVILIK (68 aa)) constitute an S4 RNA-binding domain.

Belongs to the class-I aminoacyl-tRNA synthetase family. TyrS type 1 subfamily. As to quaternary structure, homodimer.

The protein localises to the cytoplasm. It catalyses the reaction tRNA(Tyr) + L-tyrosine + ATP = L-tyrosyl-tRNA(Tyr) + AMP + diphosphate + H(+). Its function is as follows. Catalyzes the attachment of tyrosine to tRNA(Tyr) in a two-step reaction: tyrosine is first activated by ATP to form Tyr-AMP and then transferred to the acceptor end of tRNA(Tyr). The sequence is that of Tyrosine--tRNA ligase from Mycoplasma mycoides subsp. mycoides SC (strain CCUG 32753 / NCTC 10114 / PG1).